The following is a 488-amino-acid chain: HSPB1-associated protein 1 (488 aa).

Residues 88-208 (ETTCNYVEAT…EDTPFLYPTR (121 aa)) are interaction with HSPB1. The 165-residue stretch at 124–288 (WAYADYKYFV…HLARVEEAIT (165 aa)) folds into the JmjC domain. Residues 369–379 (QTGSQNLTTGT) show a composition bias toward polar residues. The disordered stretch occupies residues 369-415 (QTGSQNLTTGTDKPEAASPFGPDLVPVAQRSEEPPSERGGIFGSDGK).

In terms of assembly, interacts with CRYAB and HSPB1. As to expression, widely expressed.

The protein resides in the cytoplasm. Its function is as follows. May play a role in cellular stress response. This Homo sapiens (Human) protein is HSPB1-associated protein 1 (HSPBAP1).